Here is a 786-residue protein sequence, read N- to C-terminus: Endonuclease MutS2 (786 aa).

332–339 provides a ligand contact to ATP; the sequence is GPNTGGKT. The 76-residue stretch at 711-786 folds into the Smr domain; that stretch reads VDLRGMDSIE…GTGVTIVELK (76 aa).

Belongs to the DNA mismatch repair MutS family. MutS2 subfamily. In terms of assembly, homodimer. Binds to stalled ribosomes, contacting rRNA.

Endonuclease that is involved in the suppression of homologous recombination and thus may have a key role in the control of bacterial genetic diversity. Its function is as follows. Acts as a ribosome collision sensor, splitting the ribosome into its 2 subunits. Detects stalled/collided 70S ribosomes which it binds and splits by an ATP-hydrolysis driven conformational change. Acts upstream of the ribosome quality control system (RQC), a ribosome-associated complex that mediates the extraction of incompletely synthesized nascent chains from stalled ribosomes and their subsequent degradation. Probably generates substrates for RQC. The sequence is that of Endonuclease MutS2 from Clostridium kluyveri (strain NBRC 12016).